The following is a 374-amino-acid chain: Eukaryotic translation initiation factor 3 subunit M (374 aa).

N-acetylserine is present on serine 2. Residues serine 2 and serine 152 each carry the phosphoserine modification. The PCI domain maps to 180–339 (AASKVMVELL…RKVVVSHSTH (160 aa)). An N6-acetyllysine modification is found at lysine 254. The interval 344–374 (KQQWQQLYDTLNAWKQNLNKVKNSLLSLSDT) is interaction with HSV-1 and HSV-2. At serine 367 the chain carries Phosphoserine.

In terms of assembly, component of the eukaryotic translation initiation factor 3 (eIF-3) complex, which is composed of 13 subunits: EIF3A, EIF3B, EIF3C, EIF3D, EIF3E, EIF3F, EIF3G, EIF3H, EIF3I, EIF3J, EIF3K, EIF3L and EIF3M. The eIF-3 complex appears to include 3 stable modules: module A is composed of EIF3A, EIF3B, EIF3G and EIF3I; module B is composed of EIF3F, EIF3H, and EIF3M; and module C is composed of EIF3C, EIF3D, EIF3E, EIF3K and EIF3L. EIF3C of module C binds EIF3B of module A and EIF3H of module B, thereby linking the three modules. EIF3J is a labile subunit that binds to the eIF-3 complex via EIF3B. The eIF-3 complex interacts with RPS6KB1 under conditions of nutrient depletion. Mitogenic stimulation leads to binding and activation of a complex composed of MTOR and RPTOR, leading to phosphorylation and release of RPS6KB1 and binding of EIF4B to eIF-3. Broadly expressed.

The protein localises to the cytoplasm. Its function is as follows. Component of the eukaryotic translation initiation factor 3 (eIF-3) complex, which is required for several steps in the initiation of protein synthesis. The eIF-3 complex associates with the 40S ribosome and facilitates the recruitment of eIF-1, eIF-1A, eIF-2:GTP:methionyl-tRNAi and eIF-5 to form the 43S pre-initiation complex (43S PIC). The eIF-3 complex stimulates mRNA recruitment to the 43S PIC and scanning of the mRNA for AUG recognition. The eIF-3 complex is also required for disassembly and recycling of post-termination ribosomal complexes and subsequently prevents premature joining of the 40S and 60S ribosomal subunits prior to initiation. The eIF-3 complex specifically targets and initiates translation of a subset of mRNAs involved in cell proliferation, including cell cycling, differentiation and apoptosis, and uses different modes of RNA stem-loop binding to exert either translational activation or repression. (Microbial infection) May favor virus entry in case of infection with herpes simplex virus 1 (HSV1) or herpes simplex virus 2 (HSV2). In Homo sapiens (Human), this protein is Eukaryotic translation initiation factor 3 subunit M.